The chain runs to 348 residues: Dihydroorotase (348 aa).

Residues histidine 17 and histidine 19 each coordinate Zn(2+). Residues 19–21 and asparagine 45 each bind substrate; that span reads HLR. Lysine 103, histidine 140, and histidine 178 together coordinate Zn(2+). The residue at position 103 (lysine 103) is an N6-carboxylysine. Histidine 140 is a substrate binding site. Substrate is bound at residue leucine 223. Zn(2+) is bound at residue aspartate 251. The active site involves aspartate 251. Histidine 255 and alanine 267 together coordinate substrate.

This sequence belongs to the metallo-dependent hydrolases superfamily. DHOase family. Class II DHOase subfamily. Homodimer. Zn(2+) is required as a cofactor.

The enzyme catalyses (S)-dihydroorotate + H2O = N-carbamoyl-L-aspartate + H(+). It functions in the pathway pyrimidine metabolism; UMP biosynthesis via de novo pathway; (S)-dihydroorotate from bicarbonate: step 3/3. Functionally, catalyzes the reversible cyclization of carbamoyl aspartate to dihydroorotate. The chain is Dihydroorotase from Salmonella dublin (strain CT_02021853).